Here is a 271-residue protein sequence, read N- to C-terminus: Large ribosomal subunit protein uL2 (271 aa).

The tract at residues 221-271 is disordered; it reads RGVAMNPVDHPMGGGEGKSSGGHPRNRNGIPSNGFKTRNKKKITNKYIIKK. Basic residues predominate over residues 257-271; the sequence is TRNKKKITNKYIIKK.

The protein belongs to the universal ribosomal protein uL2 family. In terms of assembly, part of the 50S ribosomal subunit. Forms a bridge to the 30S subunit in the 70S ribosome.

Functionally, one of the primary rRNA binding proteins. Required for association of the 30S and 50S subunits to form the 70S ribosome, for tRNA binding and peptide bond formation. It has been suggested to have peptidyltransferase activity; this is somewhat controversial. Makes several contacts with the 16S rRNA in the 70S ribosome. This Karelsulcia muelleri (strain GWSS) (Sulcia muelleri) protein is Large ribosomal subunit protein uL2.